We begin with the raw amino-acid sequence, 355 residues long: Elongation factor Ts (355 aa).

Positions 82–85 are involved in Mg(2+) ion dislocation from EF-Tu; that stretch reads TDFV.

Belongs to the EF-Ts family.

It localises to the cytoplasm. Associates with the EF-Tu.GDP complex and induces the exchange of GDP to GTP. It remains bound to the aminoacyl-tRNA.EF-Tu.GTP complex up to the GTP hydrolysis stage on the ribosome. In Helicobacter pylori (strain P12), this protein is Elongation factor Ts.